The primary structure comprises 426 residues: Zinc finger protein 662 (426 aa).

A KRAB domain is found at 1–44 (MLENYGAVASLAAFPFPKPALISQLERGETPWCSVPRGALDGEA). C2H2-type zinc fingers lie at residues 192–214 (YICEECGKCFDQNEDFDQHQKTH), 220–242 (YGCKECGKAFSFRSHCIAHQRIH), 248–270 (YECQECAKAFVWKSNLIRHQRIH), 276–298 (FECKECGKGFSQNTSLTQHQRIH), 304–326 (YTCKECGKSFTRNPALLRHQRMH), 332–354 (YECKDCGKGFMWNSDLSQHQRVH), 360–382 (HECTDCGKSFFCKAHLIRHQRIH), and 388–410 (YKCNDCGKAFSQNSVLIKHQRRH).

The protein belongs to the krueppel C2H2-type zinc-finger protein family.

The protein localises to the nucleus. In terms of biological role, may be involved in transcriptional regulation. The chain is Zinc finger protein 662 (ZNF662) from Homo sapiens (Human).